Here is a 379-residue protein sequence, read N- to C-terminus: Glutamate 5-kinase (379 aa).

Lys19 is an ATP binding site. Substrate-binding residues include Ser59, Asp146, and Asn158. ATP contacts are provided by residues 178-179 (TD) and 220-226 (TGGMATK). One can recognise a PUA domain in the interval 285–363 (SGDIIIDDGA…KDIISILGHD (79 aa)).

It belongs to the glutamate 5-kinase family.

The protein localises to the cytoplasm. The catalysed reaction is L-glutamate + ATP = L-glutamyl 5-phosphate + ADP. The protein operates within amino-acid biosynthesis; L-proline biosynthesis; L-glutamate 5-semialdehyde from L-glutamate: step 1/2. Functionally, catalyzes the transfer of a phosphate group to glutamate to form L-glutamate 5-phosphate. The chain is Glutamate 5-kinase from Vibrio parahaemolyticus serotype O3:K6 (strain RIMD 2210633).